A 274-amino-acid chain; its full sequence is uncharacterized protein (274 aa).

The first 21 residues, 1–21 (MRKLTLLPLLLIITGLLTVQA), serve as a signal peptide directing secretion. Residues 249 to 266 (TSAFVILTASALIFIYLF) traverse the membrane as a helical segment.

The protein resides in the membrane. This is an uncharacterized protein from Archaeoglobus fulgidus (strain ATCC 49558 / DSM 4304 / JCM 9628 / NBRC 100126 / VC-16).